Reading from the N-terminus, the 254-residue chain is Myeloblastin (254 aa).

A signal peptide spans 1–27; it reads MSGSYPSPKGIHPFLLLALVVGGAVQA. Positions 28–29 are excised as a propeptide; sequence SK. The Peptidase S1 domain maps to 30 to 250; it reads IVGGHEARPH…YVDWIQNVLR (221 aa). A disulfide bridge links cysteine 58 with cysteine 74. Catalysis depends on charge relay system residues histidine 73 and aspartate 120. N-linked (GlcNAc...) asparagine glycans are attached at residues asparagine 127 and asparagine 176. 3 disulfides stabilise this stretch: cysteine 154-cysteine 211, cysteine 184-cysteine 190, and cysteine 201-cysteine 226. Serine 205 serves as the catalytic Charge relay system. A propeptide spanning residues 251–254 is cleaved from the precursor; the sequence is GAEP.

It belongs to the peptidase S1 family. Elastase subfamily. May form dimers. Interacts with CD177; the interaction tethers PRTN3 to the cell surface; the interaction is direct. Interacts with SERPINB1. Interacts with ADGRG3.

It is found in the lysosome. It localises to the secreted. The protein resides in the cell membrane. Its subcellular location is the membrane raft. The enzyme catalyses Hydrolysis of proteins, including elastin, by preferential cleavage: -Ala-|-Xaa- &gt; -Val-|-Xaa-.. In terms of biological role, serine protease that degrades elastin, fibronectin, laminin, vitronectin, and collagen types I, III, and IV (in vitro). By cleaving and activating receptor F2RL1/PAR-2, enhances endothelial cell barrier function and thus vascular integrity during neutrophil transendothelial migration. May play a role in neutrophil transendothelial migration, probably when associated with CD177. Triggers inflammatory processes in neutrophils by interacting with ADGRG3 upstream of F2RL1/PAR2 activation. In Mus musculus (Mouse), this protein is Myeloblastin (Prtn3).